Reading from the N-terminus, the 430-residue chain is Zinc finger CCCH domain-containing protein 48 (430 aa).

Disordered regions lie at residues 1–27 and 56–90; these read MDLDMNGGNKRVFQRLGGGSNRPTTDS and GSGPVAASSNKRVADESGFAGPSHRRGPGFSGTAN. A C3H1-type 1 zinc finger spans residues 26–52; that stretch reads DSNQKVCFHWRAGRCNRYPCPYLHREL. The segment at 102–129 adopts a C3H1-type 2 zinc-finger fold; the sequence is TKTEKLCKFWVDGNCPYGDKCRYLHCWS. 6 WD repeats span residues 142–183, 221–258, 265–304, 306–342, 345–389, and 391–429; these read GHQK…GVLN, GPVGQVYSLVVGTDLLFAGTQDGSILVWRYNSTTSCFD, GHTLAVVSLYVGANRLYSGAMDNSIKVWSLDNLQCIQTLT, HTSVVMSLICWDQFLLSCSLDNTVKIWAATEGGNLEV, THKE…ERGK, and LAKQEIRSIQIGPGGIFFTGDGSGQVKVWKWSTESTPIL.

The protein is Zinc finger CCCH domain-containing protein 48 (ZFWD1) of Arabidopsis thaliana (Mouse-ear cress).